The sequence spans 101 residues: Large ribosomal subunit protein bL9m (101 aa).

The transit peptide at 1–32 (MSIMKPTTRFFRFNSLELAVSPFQRIYGQLRF) directs the protein to the mitochondrion.

This sequence belongs to the bacterial ribosomal protein bL9 family. Component of the mitochondrial large ribosomal subunit (mt-LSU). Mature yeast 74S mitochondrial ribosomes consist of a small (37S) and a large (54S) subunit. The 37S small subunit contains a 15S ribosomal RNA (15S mt-rRNA) and at least 32 different proteins. The 54S large subunit contains a 21S rRNA (21S mt-rRNA) and at least 45 different proteins.

It localises to the mitochondrion. Its function is as follows. Component of the mitochondrial ribosome (mitoribosome), a dedicated translation machinery responsible for the synthesis of mitochondrial genome-encoded proteins, including at least some of the essential transmembrane subunits of the mitochondrial respiratory chain. The mitoribosomes are attached to the mitochondrial inner membrane and translation products are cotranslationally integrated into the membrane. The protein is Large ribosomal subunit protein bL9m of Schizosaccharomyces pombe (strain 972 / ATCC 24843) (Fission yeast).